The chain runs to 402 residues: Sorting nexin 1 (402 aa).

Positions 1–10 are enriched in polar residues; that stretch reads MESTEQPRNI. The disordered stretch occupies residues 1–25; that stretch reads MESTEQPRNISGSMQSPRSPSSHPY. The span at 11–24 shows a compositional bias: low complexity; sequence SGSMQSPRSPSSHP. Serine 16 carries the post-translational modification Phosphoserine. A PX domain is found at 24–143; sequence PYLSVSVTDP…TFLQADEETM (120 aa). A 1,2-diacyl-sn-glycero-3-phospho-(1D-myo-inositol-3-phosphate) contacts are provided by arginine 67, lysine 93, and arginine 109. Residues 160-402 enclose the BAR domain; it reads LMQMFRDVQS…LPKLEASYSV (243 aa).

It belongs to the sorting nexin family. As to quaternary structure, homodimer. Heterodimer with SNX2A or SNX2B. Component of the retromer complex which consists of VPS29 (MAG1), VPS26 (VPS26A or VPS26B), VPS35 (VPS35A or VPS35B or VPS35C), VPS5/17 (SNX1 or SNX2A or SNX2B). Interacts with BLOS1 and BLOS2. As to expression, ubiquitously expressed.

Its subcellular location is the cytoplasm. The protein localises to the endosome membrane. It localises to the prevacuolar compartment membrane. It is found in the golgi apparatus. The protein resides in the trans-Golgi network membrane. Functionally, plays a role in vesicular protein sorting. Acts at the crossroads between the secretory and endocytic pathways. Is involved in the endosome to vacuole protein transport via its interaction with the BLOS1/2 proteins and, as component of the membrane-associated retromer complex, is also involved in endosome-to-Golgi retrograde transport. Required for the auxin-carrier protein PIN2 sorting to the lytic vacuolar pathway and the trafficking of several plasma membrane proteins. Also involved in the efficient sorting of seed storage protein globulin 12S. The chain is Sorting nexin 1 (SNX1) from Arabidopsis thaliana (Mouse-ear cress).